Here is a 1155-residue protein sequence, read N- to C-terminus: Polarized growth protein rax2 (1155 aa).

The signal sequence occupies residues 1 to 27; that stretch reads MAIYSSFWIRLYFTFRFFCYFLTSVVA. Over 28–1105 the chain is Extracellular; sequence SDVSFLGDFS…KYDHIGQPRY (1078 aa). Asparagine 44, asparagine 61, asparagine 103, asparagine 118, asparagine 124, asparagine 156, asparagine 161, asparagine 182, asparagine 190, asparagine 213, asparagine 224, asparagine 306, asparagine 391, asparagine 413, asparagine 419, asparagine 510, asparagine 519, asparagine 554, asparagine 562, asparagine 607, asparagine 630, asparagine 713, asparagine 722, asparagine 743, asparagine 769, asparagine 793, asparagine 807, asparagine 824, asparagine 840, asparagine 848, asparagine 876, asparagine 893, asparagine 899, asparagine 916, asparagine 945, asparagine 1009, asparagine 1030, and asparagine 1055 each carry an N-linked (GlcNAc...) asparagine glycan. Residues 1106–1126 form a helical membrane-spanning segment; the sequence is VVIISLGISIGVMFLIMSGSI. At 1127 to 1155 the chain is on the cytoplasmic side; sequence VVEIIHWFFSEHVETLHDYSNFLKELKTQ.

This sequence belongs to the RAX2 family. In terms of assembly, interacts with for3 and tea1.

The protein localises to the cell membrane. Functionally, controls cell polarity, through the G1 phase of mitosis, via regulation of for3 localization. Required for actin cable formation where it directs the spatial distribution of the actin cables. The chain is Polarized growth protein rax2 from Schizosaccharomyces pombe (strain 972 / ATCC 24843) (Fission yeast).